Here is a 1473-residue protein sequence, read N- to C-terminus: Sulfite reductase [NADPH] subunit beta (1473 aa).

One can recognise a Flavodoxin-like domain in the interval 728–876 (LTILFASDGG…AYNLWEPELW (149 aa)). Residues Cys-1328, Cys-1334, Cys-1373, and Cys-1377 each contribute to the [4Fe-4S] cluster site. Residue Cys-1377 coordinates siroheme.

It belongs to the nitrite and sulfite reductase 4Fe-4S domain family. In terms of assembly, alpha(2)-beta(2). The alpha component is a flavoprotein, the beta component is a hemoprotein. Siroheme serves as cofactor. It depends on [4Fe-4S] cluster as a cofactor.

The protein resides in the cytoplasm. It catalyses the reaction hydrogen sulfide + 3 NADP(+) + 3 H2O = sulfite + 3 NADPH + 4 H(+). It participates in sulfur metabolism; hydrogen sulfide biosynthesis; hydrogen sulfide from sulfite (NADPH route): step 1/1. Its function is as follows. Catalyzes the reduction of sulfite to sulfide, one of several activities required for the biosynthesis of L-cysteine from sulfate. This is Sulfite reductase [NADPH] subunit beta (sir1) from Schizosaccharomyces pombe (strain 972 / ATCC 24843) (Fission yeast).